We begin with the raw amino-acid sequence, 49 residues long: Large ribosomal subunit protein bL33A (49 aa).

This sequence belongs to the bacterial ribosomal protein bL33 family.

In Geobacillus kaustophilus (strain HTA426), this protein is Large ribosomal subunit protein bL33A.